Consider the following 354-residue polypeptide: Protein-glutamate methylesterase/protein-glutamine glutaminase of group 3 operon (354 aa).

The 119-residue stretch at 3-121 (RILLATSTVE…MQLEQPAIEK (119 aa)) folds into the Response regulatory domain. Residues 158 to 340 (PIGIVGIAAS…LESIAENITA (183 aa)) form the CheB-type methylesterase domain. Catalysis depends on residues S167, H194, and D287.

It belongs to the CheB family.

It is found in the cytoplasm. It catalyses the reaction [protein]-L-glutamate 5-O-methyl ester + H2O = L-glutamyl-[protein] + methanol + H(+). The catalysed reaction is L-glutaminyl-[protein] + H2O = L-glutamyl-[protein] + NH4(+). Its function is as follows. Involved in chemotaxis. Part of a chemotaxis signal transduction system that modulates chemotaxis in response to various stimuli. Catalyzes the demethylation of specific methylglutamate residues introduced into the chemoreceptors (methyl-accepting chemotaxis proteins or MCP) by CheR. Also mediates the irreversible deamidation of specific glutamine residues to glutamic acid. The chain is Protein-glutamate methylesterase/protein-glutamine glutaminase of group 3 operon from Rhizobium meliloti (strain 1021) (Ensifer meliloti).